Consider the following 210-residue polypeptide: T-cell surface glycoprotein CD8 beta chain (210 aa).

An N-terminal signal peptide occupies residues 1 to 21 (MRPRLWLLLAAQLAVLHGSSV). The 111-residue stretch at 22-132 (LQQTPAYIKV…ELTFGKGTQL (111 aa)) folds into the Ig-like V-type domain. Residues 22-170 (LQQTPAYIKV…ETQKGPLCSP (149 aa)) are Extracellular-facing. A disulfide bridge connects residues cysteine 41 and cysteine 116. N-linked (GlcNAc...) asparagine glycosylation occurs at asparagine 102. Residues 171 to 191 (ITLGLLVAGVLVLLVSLGVAI) form a helical membrane-spanning segment. The Cytoplasmic segment spans residues 192-210 (HLCCRRRRARLRFMKQFYK).

In terms of assembly, forms disulfide-linked heterodimers with CD8A at the cell surface. Interacts with CD3D; this interaction couples TCR-CD3 with CD8. Interacts with LCK. In terms of processing, phosphorylated as a consequence of T-cell activation. Palmitoylated at the cytoplasmic tail and thereby targets the heterodimer CD8A/CD8B to lipid rafts unlike CD8A homodimers.

It is found in the cell membrane. Its function is as follows. Integral membrane glycoprotein that plays an essential role in the immune response and serves multiple functions in responses against both external and internal offenses. In T-cells, functions primarily as a coreceptor for MHC class I molecule:peptide complex. The antigens presented by class I peptides are derived from cytosolic proteins while class II derived from extracellular proteins. Interacts simultaneously with the T-cell receptor (TCR) and the MHC class I proteins presented by antigen presenting cells (APCs). In turn, recruits the Src kinase LCK to the vicinity of the TCR-CD3 complex. A palmitoylation site in the cytoplasmic tail of CD8B chain contributes to partitioning of CD8 into the plasma membrane lipid rafts where signaling proteins are enriched. Once LCK recruited, it initiates different intracellular signaling pathways by phosphorylating various substrates ultimately leading to lymphokine production, motility, adhesion and activation of cytotoxic T-lymphocytes (CTLs). Additionally, plays a critical role in thymic selection of CD8+ T-cells. This Pongo pygmaeus (Bornean orangutan) protein is T-cell surface glycoprotein CD8 beta chain (CD8B).